The following is a 25-amino-acid chain: Antimicrobial peptide 2 (25 aa).

In terms of tissue distribution, expressed by the skin glands.

It localises to the secreted. Functionally, has very strong antibacterial activity against Gram-positive bacterium S.aureus and very weak activity against Gram-negative bacterium E.coli. This is Antimicrobial peptide 2 from Xenopus tropicalis (Western clawed frog).